A 397-amino-acid polypeptide reads, in one-letter code: Chorismate synthase (397 aa).

NADP(+)-binding residues include R40 and R46. FMN contacts are provided by residues R129–S131, Q257–A258, G302, K317–S321, and R343.

Belongs to the chorismate synthase family. In terms of assembly, homotetramer. The cofactor is FMNH2.

It carries out the reaction 5-O-(1-carboxyvinyl)-3-phosphoshikimate = chorismate + phosphate. It functions in the pathway metabolic intermediate biosynthesis; chorismate biosynthesis; chorismate from D-erythrose 4-phosphate and phosphoenolpyruvate: step 7/7. Catalyzes the anti-1,4-elimination of the C-3 phosphate and the C-6 proR hydrogen from 5-enolpyruvylshikimate-3-phosphate (EPSP) to yield chorismate, which is the branch point compound that serves as the starting substrate for the three terminal pathways of aromatic amino acid biosynthesis. This reaction introduces a second double bond into the aromatic ring system. The protein is Chorismate synthase of Chlorobaculum tepidum (strain ATCC 49652 / DSM 12025 / NBRC 103806 / TLS) (Chlorobium tepidum).